The sequence spans 765 residues: AMP deaminase 3 (765 aa).

A phosphoserine mark is found at S85 and S106. Zn(2+) contacts are provided by H315 and H317. Substrate is bound by residues H317 and 386–391; that span reads KFNSKY. Zn(2+) is bound at residue H584. Residue E587 coordinates substrate. Residue H606 is the Proton acceptor of the active site. D661 contacts Zn(2+). 662-665 contributes to the substrate binding site; the sequence is DPMQ.

The protein belongs to the metallo-dependent hydrolases superfamily. Adenosine and AMP deaminases family. As to quaternary structure, homotetramer. Zn(2+) serves as cofactor. As to expression, expressed in adult tissues such as aorta, heart, kidney, lung, muscle and thyroid. Weakly expressed in thyroid and not detected in liver.

It catalyses the reaction AMP + H2O + H(+) = IMP + NH4(+). It participates in purine metabolism; IMP biosynthesis via salvage pathway; IMP from AMP: step 1/1. AMP deaminase plays a critical role in energy metabolism. This Rattus norvegicus (Rat) protein is AMP deaminase 3.